Here is a 284-residue protein sequence, read N- to C-terminus: Protease HtpX homolog (284 aa).

2 consecutive transmembrane segments (helical) span residues 7–26 and 33–47; these read TYLLMALLVGLIYAICMMLH and IILALIPNVIAYYMS. His129 serves as a coordination point for Zn(2+). Residue Glu130 is part of the active site. Residue His133 participates in Zn(2+) binding. 2 consecutive transmembrane segments (helical) span residues 148 to 168 and 180 to 200; these read LAGAIVMIAEWMLYWGGIFFV and IGTILLLILAPIAATIIQFAI. Position 205 (Glu205) interacts with Zn(2+).

The protein belongs to the peptidase M48B family. The cofactor is Zn(2+).

It is found in the cell membrane. This chain is Protease HtpX homolog, found in Methanocaldococcus jannaschii (strain ATCC 43067 / DSM 2661 / JAL-1 / JCM 10045 / NBRC 100440) (Methanococcus jannaschii).